Consider the following 323-residue polypeptide: Coiled-coil domain-containing protein 160 (323 aa).

A coiled-coil region spans residues 143-290; the sequence is SKLRLNLLNE…IKNELRTEKS (148 aa).

The protein belongs to the CCDC160 family.

The chain is Coiled-coil domain-containing protein 160 (CCDC160) from Bos taurus (Bovine).